The primary structure comprises 336 residues: Holliday junction branch migration complex subunit RuvB (336 aa).

The segment at 1-183 (MTEEHLTSQE…FGIVEHMQYY (183 aa)) is large ATPase domain (RuvB-L). Residues Leu22, Arg23, Gly64, Lys67, Thr68, Thr69, 130–132 (EDF), Arg173, Tyr183, and Arg220 contribute to the ATP site. Mg(2+) is bound at residue Thr68. A small ATPAse domain (RuvB-S) region spans residues 184 to 254 (QVEDLEKIIL…TTAMALKQLQ (71 aa)). The segment at 257 to 336 (SAGLDQTDRK…LNLPLPGEEE (80 aa)) is head domain (RuvB-H). Arg293 and Arg317 together coordinate DNA.

This sequence belongs to the RuvB family. As to quaternary structure, homohexamer. Forms an RuvA(8)-RuvB(12)-Holliday junction (HJ) complex. HJ DNA is sandwiched between 2 RuvA tetramers; dsDNA enters through RuvA and exits via RuvB. An RuvB hexamer assembles on each DNA strand where it exits the tetramer. Each RuvB hexamer is contacted by two RuvA subunits (via domain III) on 2 adjacent RuvB subunits; this complex drives branch migration. In the full resolvosome a probable DNA-RuvA(4)-RuvB(12)-RuvC(2) complex forms which resolves the HJ.

It localises to the cytoplasm. The catalysed reaction is ATP + H2O = ADP + phosphate + H(+). Functionally, the RuvA-RuvB-RuvC complex processes Holliday junction (HJ) DNA during genetic recombination and DNA repair, while the RuvA-RuvB complex plays an important role in the rescue of blocked DNA replication forks via replication fork reversal (RFR). RuvA specifically binds to HJ cruciform DNA, conferring on it an open structure. The RuvB hexamer acts as an ATP-dependent pump, pulling dsDNA into and through the RuvAB complex. RuvB forms 2 homohexamers on either side of HJ DNA bound by 1 or 2 RuvA tetramers; 4 subunits per hexamer contact DNA at a time. Coordinated motions by a converter formed by DNA-disengaged RuvB subunits stimulates ATP hydrolysis and nucleotide exchange. Immobilization of the converter enables RuvB to convert the ATP-contained energy into a lever motion, pulling 2 nucleotides of DNA out of the RuvA tetramer per ATP hydrolyzed, thus driving DNA branch migration. The RuvB motors rotate together with the DNA substrate, which together with the progressing nucleotide cycle form the mechanistic basis for DNA recombination by continuous HJ branch migration. Branch migration allows RuvC to scan DNA until it finds its consensus sequence, where it cleaves and resolves cruciform DNA. In Lactobacillus delbrueckii subsp. bulgaricus (strain ATCC 11842 / DSM 20081 / BCRC 10696 / JCM 1002 / NBRC 13953 / NCIMB 11778 / NCTC 12712 / WDCM 00102 / Lb 14), this protein is Holliday junction branch migration complex subunit RuvB.